The primary structure comprises 129 residues: Cytochrome c-type protein SHP (129 aa).

The signal sequence occupies residues 1–17 (MTRFLILSAVLAGPALA). Positions 60, 63, and 64 each coordinate heme c. Cysteines 106 and 114 form a disulfide.

Binds 1 heme c group covalently per subunit.

Functionally, high-spin cytochrome. Transiently bind oxygen during autoxidation, which occurs with a half-life of 3 minutes with a 4-fold excess of O(2). Also binds carbon monoxide, azide and cyanide. The sequence is that of Cytochrome c-type protein SHP (shp) from Cereibacter sphaeroides (strain ATCC 17023 / DSM 158 / JCM 6121 / CCUG 31486 / LMG 2827 / NBRC 12203 / NCIMB 8253 / ATH 2.4.1.) (Rhodobacter sphaeroides).